We begin with the raw amino-acid sequence, 123 residues long: Small ribosomal subunit protein uS13 (123 aa).

A disordered region spans residues Pro97 to Lys123.

Belongs to the universal ribosomal protein uS13 family. In terms of assembly, part of the 30S ribosomal subunit. Forms a loose heterodimer with protein S19. Forms two bridges to the 50S subunit in the 70S ribosome.

Located at the top of the head of the 30S subunit, it contacts several helices of the 16S rRNA. In the 70S ribosome it contacts the 23S rRNA (bridge B1a) and protein L5 of the 50S subunit (bridge B1b), connecting the 2 subunits; these bridges are implicated in subunit movement. Contacts the tRNAs in the A and P-sites. The protein is Small ribosomal subunit protein uS13 of Ehrlichia canis (strain Jake).